A 332-amino-acid polypeptide reads, in one-letter code: SLAM family member 6 (332 aa).

Positions 1–21 are cleaved as a signal peptide; the sequence is MLWLFQSLLFVFCFGPGNVVS. Residues 22–226 lie on the Extracellular side of the membrane; the sequence is QSSLTPLMVN…VKIQYTDTKM (205 aa). Residues 35 to 120 form the Ig-like V-type domain; that stretch reads GESVTLPLEF…ISTKTSAKLS (86 aa). N-linked (GlcNAc...) asparagine glycans are attached at residues Asn-58, Asn-87, Asn-137, Asn-144, Asn-161, Asn-178, and Asn-203. The Ig-like C2-type domain maps to 132 to 209; it reads NIQVTNHSQL…AVSNLSFSVS (78 aa). 2 disulfides stabilise this stretch: Cys-147/Cys-214 and Cys-153/Cys-195. Residues 227 to 247 form a helical membrane-spanning segment; sequence ILFMVSGICIVFGFIILLLLV. The Cytoplasmic portion of the chain corresponds to 248 to 331; sequence LRKRRDSLSL…FSRATALDNV (84 aa). Tyr-274 carries the post-translational modification Phosphotyrosine. At Ser-278 the chain carries Phosphoserine. Short sequence motifs (ITSM) lie at residues 283-288 and 307-312; these read TVYASV and TIYSTI. Tyr-309 is modified (phosphotyrosine).

In terms of assembly, homodimer. Interacts with PTN6. Interacts (phosphorylated) with PTN11. Interacts (phosphorylated on tyrosine residues) with SH2D1A/SAP and SH2D1B/EAT2; SH2D1A and SH2D1B can associate with the same SLAMF6 molecule; interaction with SH2D1B is mediated by ITSM 2. Post-translationally, phosphorylation in NK cells upon engagment by SLAMF6-expressing target cells is leading to receptor activation. Expressed by all (resting and activated) natural killer cells (NK), T- and B-lymphocytes. Increased surface expression on T-cells of systemic lupus erythematosus (SLE) patients.

It localises to the cell membrane. Self-ligand receptor of the signaling lymphocytic activation molecule (SLAM) family. SLAM receptors triggered by homo- or heterotypic cell-cell interactions are modulating the activation and differentiation of a wide variety of immune cells and thus are involved in the regulation and interconnection of both innate and adaptive immune response. Activities are controlled by presence or absence of small cytoplasmic adapter proteins, SH2D1A/SAP and/or SH2D1B/EAT-2. Triggers cytolytic activity only in natural killer cells (NK) expressing high surface densities of natural cytotoxicity receptors. Positive signaling in NK cells implicates phosphorylation of VAV1. NK cell activation seems to depend on SH2D1B and not on SH2D1A. In conjunction with SLAMF1 controls the transition between positive selection and the subsequent expansion and differentiation of the thymocytic natural killer T (NKT) cell lineage. Promotes T-cell differentiation into a helper T-cell Th17 phenotype leading to increased IL-17 secretion; the costimulatory activity requires SH2D1A. Promotes recruitment of RORC to the IL-17 promoter. In conjunction with SLAMF1 and CD84/SLAMF5 may be a negative regulator of the humoral immune response. In the absence of SH2D1A/SAP can transmit negative signals to CD4(+) T-cells and NKT cells. Negatively regulates germinal center formation by inhibiting T-cell:B-cell adhesion; the function probably implicates increased association with PTPN6/SHP-1 via ITSMs in absence of SH2D1A/SAP. However, reported to be involved in maintaining B-cell tolerance in germinal centers and in preventing autoimmunity. This is SLAM family member 6 (SLAMF6) from Homo sapiens (Human).